The following is a 362-amino-acid chain: Phospho-N-acetylmuramoyl-pentapeptide-transferase (362 aa).

The next 10 membrane-spanning stretches (helical) occupy residues 21–41 (YITF…FLLG), 75–95 (TMGG…WADL), 100–120 (VWAV…DDFL), 136–156 (LVVQ…LMPG), 170–190 (LMIP…MGAS), 201–221 (GLAI…AYLV), 225–245 (IFSH…AVFC), 247–267 (ALIG…AVFM), 290–310 (IVLA…IVQV), and 339–359 (TVVI…LATL).

Belongs to the glycosyltransferase 4 family. MraY subfamily. Mg(2+) is required as a cofactor.

Its subcellular location is the cell inner membrane. The catalysed reaction is UDP-N-acetyl-alpha-D-muramoyl-L-alanyl-gamma-D-glutamyl-meso-2,6-diaminopimeloyl-D-alanyl-D-alanine + di-trans,octa-cis-undecaprenyl phosphate = di-trans,octa-cis-undecaprenyl diphospho-N-acetyl-alpha-D-muramoyl-L-alanyl-D-glutamyl-meso-2,6-diaminopimeloyl-D-alanyl-D-alanine + UMP. The protein operates within cell wall biogenesis; peptidoglycan biosynthesis. Catalyzes the initial step of the lipid cycle reactions in the biosynthesis of the cell wall peptidoglycan: transfers peptidoglycan precursor phospho-MurNAc-pentapeptide from UDP-MurNAc-pentapeptide onto the lipid carrier undecaprenyl phosphate, yielding undecaprenyl-pyrophosphoryl-MurNAc-pentapeptide, known as lipid I. The protein is Phospho-N-acetylmuramoyl-pentapeptide-transferase of Acidiphilium cryptum (strain JF-5).